A 193-amino-acid chain; its full sequence is Peptidyl-tRNA hydrolase (193 aa).

Residue Tyr21 coordinates tRNA. Residue His26 is the Proton acceptor of the active site. TRNA contacts are provided by Tyr72, Asn74, and Asn120.

The protein belongs to the PTH family. In terms of assembly, monomer.

Its subcellular location is the cytoplasm. It catalyses the reaction an N-acyl-L-alpha-aminoacyl-tRNA + H2O = an N-acyl-L-amino acid + a tRNA + H(+). Functionally, hydrolyzes ribosome-free peptidyl-tRNAs (with 1 or more amino acids incorporated), which drop off the ribosome during protein synthesis, or as a result of ribosome stalling. Catalyzes the release of premature peptidyl moieties from peptidyl-tRNA molecules trapped in stalled 50S ribosomal subunits, and thus maintains levels of free tRNAs and 50S ribosomes. This Nocardia farcinica (strain IFM 10152) protein is Peptidyl-tRNA hydrolase.